The sequence spans 345 residues: S-adenosylmethionine:tRNA ribosyltransferase-isomerase (345 aa).

Belongs to the QueA family. As to quaternary structure, monomer.

The protein localises to the cytoplasm. It carries out the reaction 7-aminomethyl-7-carbaguanosine(34) in tRNA + S-adenosyl-L-methionine = epoxyqueuosine(34) in tRNA + adenine + L-methionine + 2 H(+). It participates in tRNA modification; tRNA-queuosine biosynthesis. Functionally, transfers and isomerizes the ribose moiety from AdoMet to the 7-aminomethyl group of 7-deazaguanine (preQ1-tRNA) to give epoxyqueuosine (oQ-tRNA). This chain is S-adenosylmethionine:tRNA ribosyltransferase-isomerase, found in Shewanella pealeana (strain ATCC 700345 / ANG-SQ1).